A 182-amino-acid polypeptide reads, in one-letter code: Large ribosomal subunit protein uL5c (182 aa).

It belongs to the universal ribosomal protein uL5 family. In terms of assembly, part of the 50S ribosomal subunit; contacts the 5S rRNA.

The protein localises to the plastid. It is found in the chloroplast. In terms of biological role, binds 5S rRNA, forms part of the central protuberance of the 50S subunit. The protein is Large ribosomal subunit protein uL5c (rpl5) of Cyanidium caldarium (Red alga).